A 675-amino-acid chain; its full sequence is uncharacterized protein (675 aa).

A run of 4 helical transmembrane segments spans residues 2 to 22 (QHTF…DFFF), 397 to 417 (LFLL…VFIA), 448 to 468 (LLVA…LCCY), and 481 to 501 (IFVY…TYAA). Disordered stretches follow at residues 616-635 (YSPN…DIND) and 646-675 (QRMG…ELSD). The span at 665–675 (VFSESDEELSD) shows a compositional bias: acidic residues. Residue S669 is modified to Phosphoserine.

This sequence belongs to the 1-acyl-sn-glycerol-3-phosphate acyltransferase family.

The protein localises to the endoplasmic reticulum membrane. This is an uncharacterized protein from Schizosaccharomyces pombe (strain 972 / ATCC 24843) (Fission yeast).